Here is a 423-residue protein sequence, read N- to C-terminus: Mitogen-activated protein kinase 9 (423 aa).

The region spanning 26–321 is the Protein kinase domain; that stretch reads YQQLKPIGSG…VDEALRHPYI (296 aa). ATP-binding positions include 32-40 and Lys-55; that span reads IGSGAQGIV. The active-site Proton acceptor is Asp-151. Thr-183 bears the Phosphothreonine; by MAP2K7 mark. The TXY motif lies at 183–185; sequence TPY. Tyr-185 is subject to Phosphotyrosine; by MAP2K4. Residues 366 to 375 are compositionally biased toward basic and acidic residues; it reads RSKNGVKDQP. Positions 366 to 423 are disordered; sequence RSKNGVKDQPSDAAVSSKATPSQSSSINDISSMSTEHTLASDTDSSLDASTGPLEGCR. Over residues 387-416 the composition is skewed to low complexity; sequence SQSSSINDISSMSTEHTLASDTDSSLDAST.

It belongs to the protein kinase superfamily. CMGC Ser/Thr protein kinase family. MAP kinase subfamily. In terms of assembly, interacts with MECOM. Binds to at least four scaffolding proteins, MAPK8IP1/JIP-1, MAPK8IP2/JIP-2, MAPK8IP3/JIP-3/JSAP1 and SPAG9/MAPK8IP4/JIP-4. These proteins also bind other components of the JNK signaling pathway. Interacts with NFATC4. Interacts with ATF7; the interaction does not phosphorylate ATF7 but acts as a docking site for ATF7-associated partners such as JUN. Interacts with BCL10. Interacts with CTNNB1 and GSK3B. Interacts with DCLK2. Interacts with MAPKBP1. Interacts with POU5F1; phosphorylates POU5F1 at 'Ser-347'. Found in a complex with SH3RF1, RAC2, MAP3K7/TAK1, MAP2K7/MKK7, MAPK8IP1/JIP1 and MAPK8/JNK1. The cofactor is Mg(2+). Dually phosphorylated on Thr-183 and Tyr-185 by MAP2K7 and MAP2K4, which activates the enzyme. Autophosphorylated in vitro.

It localises to the cytoplasm. It is found in the nucleus. It catalyses the reaction L-seryl-[protein] + ATP = O-phospho-L-seryl-[protein] + ADP + H(+). It carries out the reaction L-threonyl-[protein] + ATP = O-phospho-L-threonyl-[protein] + ADP + H(+). Its activity is regulated as follows. Activated by threonine and tyrosine phosphorylation by either of two dual specificity kinases, MAP2K4 and MAP2K7. MAP2K4 shows a strong preference for Tyr-185 while MAP2K7 phosphorylates Tyr-183 preferentially. Inhibited by dual specificity phosphatases, such as DUSP1. Serine/threonine-protein kinase involved in various processes such as cell proliferation, differentiation, migration, transformation and programmed cell death. Extracellular stimuli such as pro-inflammatory cytokines or physical stress stimulate the stress-activated protein kinase/c-Jun N-terminal kinase (SAP/JNK) signaling pathway. In this cascade, two dual specificity kinases MAP2K4/MKK4 and MAP2K7/MKK7 phosphorylate and activate MAPK9/JNK2. In turn, MAPK9/JNK2 phosphorylates a number of transcription factors, primarily components of AP-1 such as JUN and ATF2 and thus regulates AP-1 transcriptional activity. In response to oxidative or ribotoxic stresses, inhibits rRNA synthesis by phosphorylating and inactivating the RNA polymerase 1-specific transcription initiation factor RRN3. Promotes stressed cell apoptosis by phosphorylating key regulatory factors including TP53 and YAP1. In T-cells, MAPK8 and MAPK9 are required for polarized differentiation of T-helper cells into Th1 cells. Upon T-cell receptor (TCR) stimulation, is activated by CARMA1, BCL10, MAP2K7 and MAP3K7/TAK1 to regulate JUN protein levels. Plays an important role in the osmotic stress-induced epithelial tight-junctions disruption. When activated, promotes beta-catenin/CTNNB1 degradation and inhibits the canonical Wnt signaling pathway. Also participates in neurite growth in spiral ganglion neurons. Phosphorylates the CLOCK-BMAL1 heterodimer and plays a role in the regulation of the circadian clock. Phosphorylates POU5F1, which results in the inhibition of POU5F1's transcriptional activity and enhances its proteasomal degradation. Phosphorylates ALKBH5 in response to reactive oxygen species (ROS), promoting ALKBH5 sumoylation and inactivation. This chain is Mitogen-activated protein kinase 9 (Mapk9), found in Rattus norvegicus (Rat).